A 164-amino-acid polypeptide reads, in one-letter code: Phosphopantetheine adenylyltransferase (164 aa).

A substrate-binding site is contributed by Ser-10. Residues Ser-10–Phe-11 and His-18 contribute to the ATP site. The substrate site is built by Lys-42, Met-74, and Arg-88. ATP-binding positions include Gly-89–Arg-91, Glu-99, and Tyr-124–Arg-130.

This sequence belongs to the bacterial CoaD family. As to quaternary structure, homohexamer. The cofactor is Mg(2+).

The protein resides in the cytoplasm. The enzyme catalyses (R)-4'-phosphopantetheine + ATP + H(+) = 3'-dephospho-CoA + diphosphate. Its pathway is cofactor biosynthesis; coenzyme A biosynthesis; CoA from (R)-pantothenate: step 4/5. Functionally, reversibly transfers an adenylyl group from ATP to 4'-phosphopantetheine, yielding dephospho-CoA (dPCoA) and pyrophosphate. The chain is Phosphopantetheine adenylyltransferase from Anaeromyxobacter dehalogenans (strain 2CP-1 / ATCC BAA-258).